Consider the following 836-residue polypeptide: Sucrose synthase 5 (836 aa).

Positions 270–748 are GT-B glycosyltransferase; sequence RIFNVVIFSV…GLQRINECYT (479 aa). The disordered stretch occupies residues 805–836; it reads PPPLPPKPLVKPSASKGSKRTQPRLSFRLFGA.

This sequence belongs to the glycosyltransferase 1 family. Plant sucrose synthase subfamily. In terms of tissue distribution, detected in the whole plant but more precisely confined to the vasculature in cotyledons, leaves, petals, anthers and roots. Also detected in developing siliques, young immature rosette and cauline leaves.

Its subcellular location is the secreted. The protein resides in the cell wall. It carries out the reaction an NDP-alpha-D-glucose + D-fructose = a ribonucleoside 5'-diphosphate + sucrose + H(+). In terms of biological role, sucrose-cleaving enzyme that provides UDP-glucose and fructose for various metabolic pathways. Functions in callose synthesis at the site of phloem sieve elements. The polypeptide is Sucrose synthase 5 (SUS5) (Arabidopsis thaliana (Mouse-ear cress)).